The chain runs to 456 residues: Exodeoxyribonuclease 7 large subunit (456 aa).

This sequence belongs to the XseA family. Heterooligomer composed of large and small subunits.

The protein localises to the cytoplasm. It catalyses the reaction Exonucleolytic cleavage in either 5'- to 3'- or 3'- to 5'-direction to yield nucleoside 5'-phosphates.. Its function is as follows. Bidirectionally degrades single-stranded DNA into large acid-insoluble oligonucleotides, which are then degraded further into small acid-soluble oligonucleotides. This Shigella boydii serotype 4 (strain Sb227) protein is Exodeoxyribonuclease 7 large subunit.